The primary structure comprises 369 residues: Somatostatin receptor type 2 (369 aa).

Residues 1 to 43 (MEMSSEQLNGSQVWVSSPFDLNGSLGPSNGSNQTEPYYDMTSN) lie on the Extracellular side of the membrane. N9, N22, N29, and N32 each carry an N-linked (GlcNAc...) asparagine glycan. A helical transmembrane segment spans residues 44-67 (AVLTFIYFVVCVVGLCGNTLVIYV). Topologically, residues 68-78 (ILRYAKMKTIT) are cytoplasmic. The helical transmembrane segment at 79-103 (NIYILNLAIADELFMLGLPFLAMQV) threads the bilayer. Topologically, residues 104–118 (ALVHWPFGKAICRVV) are extracellular. A disulfide bridge connects residues C115 and C193. Residues 119-138 (MTVDGINQFTSIFCLTVMSI) form a helical membrane-spanning segment. At 139–161 (DRYLAVVHPIKSAKWRRPRTAKM) the chain is on the cytoplasmic side. The helical transmembrane segment at 162–181 (INVAVWCVSLLVILPIMIYA) threads the bilayer. The Extracellular portion of the chain corresponds to 182 to 207 (GLRSNQWGRSSCTINWPGESGAWYTG). The helical transmembrane segment at 208-229 (FIIYAFILGFLVPLTIICLCYL) threads the bilayer. Over 230–253 (FIIIKVKSSGIRVGSSKRKKSEKK) the chain is Cytoplasmic. A helical transmembrane segment spans residues 254–278 (VTRMVSIVVAVFIFCWLPFYIFNVS). At 279 to 288 (SVSVAISPTP) the chain is on the extracellular side. A helical transmembrane segment spans residues 289–303 (ALKGMFDFVVILTYA). The Cytoplasmic portion of the chain corresponds to 304 to 369 (NSCANPILYA…LLNGDLQTSI (66 aa)). A lipid anchor (S-palmitoyl cysteine) is attached at C328. Residues S341, S343, and S348 each carry the phosphoserine modification. Phosphothreonine occurs at positions 353 and 354.

This sequence belongs to the G-protein coupled receptor 1 family. In terms of assembly, homodimer and heterodimer with SSTR3 and SSTR5. Heterodimerization with SSTR3 inactivates SSTR3 receptor function. Heterodimerization with SSTR5 is enhanced by agonist stimulation of SSTR2 and increases SSTR2 cell growth inhibition activity. Following agonist stimulation, homodimers dissociate into monomers which is required for receptor internalization. Interacts with beta-arrestin; this interaction is necessary for receptor internalization and is destabilized by heterodimerization with SSTR5 which results in increased recycling of SSTR2 to the cell surface. Interacts (via C-terminus) with SHANK1 (via PDZ domain). Post-translationally, phosphorylated on serine and threonine residues in response to agonist stimulation, leading to receptor desensitization and rapid internalization. Phosphorylated to a greater extent on serine than threonine residues. Threonine phosphorylation is required for arrestin binding and receptor endocytosis but is not necessary for desensitization. In terms of tissue distribution, cerebrum and kidney.

The protein localises to the cell membrane. The protein resides in the cytoplasm. Receptor for somatostatin-14 and -28. This receptor is coupled via pertussis toxin sensitive G proteins to inhibition of adenylyl cyclase. In addition it stimulates phosphotyrosine phosphatase and PLC via pertussis toxin insensitive as well as sensitive G proteins. Inhibits calcium entry by suppressing voltage-dependent calcium channels. Acts as the functionally dominant somatostatin receptor in pancreatic alpha- and beta-cells where it mediates the inhibitory effect of somatostatin-14 on hormone secretion. Inhibits cell growth through enhancement of MAPK1 and MAPK2 phosphorylation and subsequent up-regulation of CDKN1B. Stimulates neuronal migration and axon outgrowth and may participate in neuron development and maturation during brain development. Mediates negative regulation of insulin receptor signaling through PTPN6. Inactivates SSTR3 receptor function following heterodimerization. In Mus musculus (Mouse), this protein is Somatostatin receptor type 2 (Sstr2).